A 95-amino-acid polypeptide reads, in one-letter code: Signal recognition particle 19 kDa protein (95 aa).

This sequence belongs to the SRP19 family. Part of the signal recognition particle protein translocation system, which is composed of SRP and FtsY. Archaeal SRP consists of a 7S RNA molecule of 300 nucleotides and two protein subunits: SRP54 and SRP19.

It is found in the cytoplasm. Functionally, involved in targeting and insertion of nascent membrane proteins into the cytoplasmic membrane. Binds directly to 7S RNA and mediates binding of the 54 kDa subunit of the SRP. The protein is Signal recognition particle 19 kDa protein of Desulfurococcus amylolyticus (strain DSM 18924 / JCM 16383 / VKM B-2413 / 1221n) (Desulfurococcus kamchatkensis).